The following is a 248-amino-acid chain: Acetylglutamate kinase (248 aa).

Substrate contacts are provided by residues 36 to 37 (GG), arginine 58, and asparagine 147.

The protein belongs to the acetylglutamate kinase family. ArgB subfamily.

It localises to the cytoplasm. It carries out the reaction N-acetyl-L-glutamate + ATP = N-acetyl-L-glutamyl 5-phosphate + ADP. Its pathway is amino-acid biosynthesis; L-arginine biosynthesis; N(2)-acetyl-L-ornithine from L-glutamate: step 2/4. In terms of biological role, catalyzes the ATP-dependent phosphorylation of N-acetyl-L-glutamate. The chain is Acetylglutamate kinase from Thermus thermophilus (strain ATCC BAA-163 / DSM 7039 / HB27).